We begin with the raw amino-acid sequence, 96 residues long: Small ribosomal subunit protein bS6 (96 aa).

Belongs to the bacterial ribosomal protein bS6 family.

In terms of biological role, binds together with bS18 to 16S ribosomal RNA. In Streptococcus pneumoniae serotype 19F (strain G54), this protein is Small ribosomal subunit protein bS6.